Consider the following 580-residue polypeptide: Small conductance calcium-activated potassium channel protein 2 (580 aa).

Disordered regions lie at residues 1-68 (MSSC…VSKP) and 88-116 (GGGG…KKNQ). The span at 48-61 (SSPSAAAAASSSAP) shows a compositional bias: low complexity. Positions 88–104 (GGGGGGGGGGGGSGHGS) are enriched in gly residues. Residues 140–160 (LIFGMFGIVVMVIETELSWGA) traverse the membrane as a helical segment. A Phosphotyrosine modification is found at Tyr-161. A helical transmembrane segment spans residues 169–189 (LALKCLISLSTIILLGLIIVY). The helical transmembrane segment at 215–235 (IFFICLEILVCAIHPIPGNYT) threads the bilayer. Residues 257-277 (IILSIPMFLRLYLIARVMLLH) form a helical membrane-spanning segment. Residues 306–326 (LMTICPGTVLLVFSISLWIIA) form a helical membrane-spanning segment. The segment at residues 346–366 (FLGAMWLISITFLSIGYGDMV) is an intramembrane region (pore-forming). Residues 375 to 395 (VCLLTGIMGAGCTALVVAVVA) traverse the membrane as a helical segment. The interval 413 to 489 (DTQLTKRVKN…LVDLAKTQNI (77 aa)) is calmodulin-binding. Residues 551–560 (HVTYNAERSR) are compositionally biased toward basic and acidic residues. Positions 551–580 (HVTYNAERSRSSSRRRRSSSTAPPTSSESS) are disordered. A compositionally biased stretch (low complexity) spans 569–580 (SSTAPPTSSESS).

It belongs to the potassium channel KCNN family. KCa2.2/KCNN2 subfamily. As to quaternary structure, homodimer. Heteromultimer with KCNN1 and KCNN3. The complex is composed of 4 channel subunits each of which binds to a calmodulin subunit which regulates the channel activity through calcium-binding. Interacts (via N-terminal domain) with MPP2. As to expression, brain.

It localises to the membrane. The protein resides in the cytoplasm. Its subcellular location is the myofibril. The protein localises to the sarcomere. It is found in the z line. It carries out the reaction K(+)(in) = K(+)(out). With respect to regulation, inhibited by bee venom neurotoxin apamin. Inhibited by UCL 1684 and tetraethylammonium (TEA). Functionally, small conductance calcium-activated potassium channel that mediates the voltage-independent transmembrane transfer of potassium across the cell membrane through a constitutive interaction with calmodulin which binds the intracellular calcium allowing its opening. The current is characterized by a voltage-independent activation, an intracellular calcium concentration increase-dependent activation and a single-channel conductance of about 3 picosiemens. Also presents an inwardly rectifying current, thus reducing its already small outward conductance of potassium ions, which is particularly the case when the membrane potential displays positive values, above + 20 mV. The inward rectification could be due to a blockade of the outward current by intracellular divalent cations such as calcium and magnesium and could also be due to an intrinsic property of the channel pore, independent of intracellular divalent ions. There are three positively charged amino acids in the S6 transmembrane domain, close to the pore, that collectively control the conductance and rectification through an electrostatic mechanism. Additionally, electrostatic contributions from these residues also play an important role in determining the intrinsic open probability of the channel in the absence of calcium, affecting the apparent calcium affinity for activation. Forms an heteromeric complex with calmodulin, which is constitutively associated in a calcium-independent manner. Channel opening is triggered when calcium binds the calmodulin resulting in a rotary movement leading to the formation of the dimeric complex to open the gate. Plays a role in the repolarization phase of cardiac action potential. This chain is Small conductance calcium-activated potassium channel protein 2, found in Rattus norvegicus (Rat).